Consider the following 262-residue polypeptide: Hydroxyethylthiazole kinase (262 aa).

Position 50 (M50) interacts with substrate. The ATP site is built by R125 and T171. G198 contributes to the substrate binding site.

It belongs to the Thz kinase family. The cofactor is Mg(2+).

The enzyme catalyses 5-(2-hydroxyethyl)-4-methylthiazole + ATP = 4-methyl-5-(2-phosphooxyethyl)-thiazole + ADP + H(+). It participates in cofactor biosynthesis; thiamine diphosphate biosynthesis; 4-methyl-5-(2-phosphoethyl)-thiazole from 5-(2-hydroxyethyl)-4-methylthiazole: step 1/1. Functionally, catalyzes the phosphorylation of the hydroxyl group of 4-methyl-5-beta-hydroxyethylthiazole (THZ). This chain is Hydroxyethylthiazole kinase, found in Escherichia coli O139:H28 (strain E24377A / ETEC).